We begin with the raw amino-acid sequence, 521 residues long: 4-cresol dehydrogenase [hydroxylating] flavoprotein subunit (521 aa).

Positions 54-268 constitute an FAD-binding PCMH-type domain; it reads AAHAPSAAVT…VEIVDALRPL (215 aa). Residue Y384 is modified to O-8alpha-FAD tyrosine.

In terms of assembly, tetramer of two cytochrome subunits and two flavoprotein subunits. FAD serves as cofactor.

The enzyme catalyses 4-methylphenol + 4 oxidized [azurin] + H2O = 4 reduced [azurin] + 4-hydroxybenzaldehyde + 4 H(+). It participates in aromatic compound metabolism; p-cresol degradation. In terms of biological role, catalyzes the azurin dependent hydroxylation of the methyl group of 4-methylphenol to form 4-hydroxybenzaldehyde. This is 4-cresol dehydrogenase [hydroxylating] flavoprotein subunit (pchF) from Pseudomonas putida (Arthrobacter siderocapsulatus).